Reading from the N-terminus, the 44-residue chain is U4-ctenitoxin-Co1a (44 aa).

Intrachain disulfides connect C2–C19, C9–C25, C18–C39, and C27–C37.

In terms of tissue distribution, expressed by the venom gland.

The protein resides in the secreted. Omega-agatoxins are antagonists of voltage-gated calcium channels (Cav). Toxic to mice by intracerebroventricular injection. This Ctenus ornatus (Brazilian spider) protein is U4-ctenitoxin-Co1a.